We begin with the raw amino-acid sequence, 67 residues long: MARITVEDCLEQIPNRFQLVLAATYRARMLSQGHAPKVDCKNKPAVTALREIAAGKIGLEMLKKVPL.

It belongs to the RNA polymerase subunit omega family. As to quaternary structure, the RNAP catalytic core consists of 2 alpha, 1 beta, 1 beta' and 1 omega subunit. When a sigma factor is associated with the core the holoenzyme is formed, which can initiate transcription.

It catalyses the reaction RNA(n) + a ribonucleoside 5'-triphosphate = RNA(n+1) + diphosphate. Promotes RNA polymerase assembly. Latches the N- and C-terminal regions of the beta' subunit thereby facilitating its interaction with the beta and alpha subunits. This Albidiferax ferrireducens (strain ATCC BAA-621 / DSM 15236 / T118) (Rhodoferax ferrireducens) protein is DNA-directed RNA polymerase subunit omega.